We begin with the raw amino-acid sequence, 516 residues long: Putative fatty acyl-CoA reductase CG8306 (516 aa).

The next 3 helical transmembrane spans lie at 356–376, 471–491, and 496–516; these read WVFR…LDLV, ILLG…FKLI, and GIST…FGLL.

The protein belongs to the fatty acyl-CoA reductase family.

Its subcellular location is the membrane. It catalyses the reaction a long-chain fatty acyl-CoA + 2 NADPH + 2 H(+) = a long-chain primary fatty alcohol + 2 NADP(+) + CoA. In terms of biological role, catalyzes the reduction of C16 or C18 fatty acyl-CoA to fatty alcohols. This is Putative fatty acyl-CoA reductase CG8306 from Drosophila melanogaster (Fruit fly).